The primary structure comprises 120 residues: U13-lycotoxin-Ls1a (120 aa).

An N-terminal signal peptide occupies residues 1 to 16 (MKILFVLISILYAVYC). Residues 17-54 (FSSEEDVDSAYLANELEPVEDINSEQYAALEPKEEQER) constitute a propeptide that is removed on maturation. Disulfide bonds link cysteine 56/cysteine 70, cysteine 63/cysteine 76, cysteine 69/cysteine 87, and cysteine 78/cysteine 85. The Agouti domain maps to 56-95 (CADMGQDCKDDCDCCLNIATCNCWFGRYFCSCTFGDYQTC).

The protein belongs to the neurotoxin 05 (agouti) family. In terms of processing, contains 6 disulfide bonds. In terms of tissue distribution, expressed by the venom gland.

It localises to the secreted. This chain is U13-lycotoxin-Ls1a, found in Lycosa singoriensis (Wolf spider).